A 331-amino-acid polypeptide reads, in one-letter code: 6-phosphogluconolactonase (331 aa).

Belongs to the cycloisomerase 2 family.

It catalyses the reaction 6-phospho-D-glucono-1,5-lactone + H2O = 6-phospho-D-gluconate + H(+). Its pathway is carbohydrate degradation; pentose phosphate pathway; D-ribulose 5-phosphate from D-glucose 6-phosphate (oxidative stage): step 2/3. Functionally, catalyzes the hydrolysis of 6-phosphogluconolactone to 6-phosphogluconate. In Salmonella agona (strain SL483), this protein is 6-phosphogluconolactonase.